Consider the following 166-residue polypeptide: Sperm-egg fusion protein TMEM95 (166 aa).

The N-terminal stretch at 1-16 (MWTLALGGIFLAAVEA) is a signal peptide. 4 disulfides stabilise this stretch: Cys-17–Cys-118, Cys-20–Cys-121, Cys-105–Cys-128, and Cys-109–Cys-134. The Extracellular portion of the chain corresponds to 17–145 (CVFCRFPDRE…PGSHDLWEAR (129 aa)). N-linked (GlcNAc...) asparagine glycosylation is present at Asn-117. Residues 146-165 (ILLLFVCGTALLLGVPSLAV) traverse the membrane as a helical segment. Residue Glu-166 is a topological domain, cytoplasmic.

Belongs to the TMEM95 family. As to quaternary structure, does not interact with sperm-egg fusion proteins IZUMO1 or IZUMO1R/JUNO. Post-translationally, N-glycosylated. In terms of tissue distribution, detected in testis and brain with higher levels in brain than testis.

The protein localises to the cytoplasmic vesicle. Its subcellular location is the secretory vesicle. It localises to the acrosome membrane. Functionally, sperm protein required for fusion of sperm with the egg membrane during fertilization. The protein is Sperm-egg fusion protein TMEM95 of Bos taurus (Bovine).